Consider the following 246-residue polypeptide: NLP effector protein 2 (246 aa).

An N-terminal signal peptide occupies residues 1 to 19 (MKFVVFLCAIAAVVATIQG). Residues 113–123 (AIMYSWYFPKD) carry the Conserved undecapeptide motif I motif. The Hepta-peptide GHRHDWE motif II motif lies at 130 to 136 (GHRHDWE).

Belongs to the Necrosis inducing protein (NPP1) family.

Its subcellular location is the secreted. Functionally, secreted effector that contributes strongly to virulence during infection by P.capsici. Causes large necrotic areas in both host C.annuum and non-host N.benthamiana. The sequence is that of NLP effector protein 2 from Phytophthora capsici.